Consider the following 191-residue polypeptide: Elongation factor P (191 aa).

It belongs to the elongation factor P family.

Its subcellular location is the cytoplasm. Its pathway is protein biosynthesis; polypeptide chain elongation. Involved in peptide bond synthesis. Stimulates efficient translation and peptide-bond synthesis on native or reconstituted 70S ribosomes in vitro. Probably functions indirectly by altering the affinity of the ribosome for aminoacyl-tRNA, thus increasing their reactivity as acceptors for peptidyl transferase. The polypeptide is Elongation factor P (Bartonella henselae (strain ATCC 49882 / DSM 28221 / CCUG 30454 / Houston 1) (Rochalimaea henselae)).